Here is a 492-residue protein sequence, read N- to C-terminus: High-affinity nickel transport protein (492 aa).

Residues 1–24 are Cytoplasmic-facing; sequence MLSRWTRRVNESRLAQRKLTLLGR. The chain crosses the membrane as a helical span at residues 25-45; the sequence is AIALVVGELLFNAVCWIAAGI. The Extracellular portion of the chain corresponds to 46–50; it reads CFGKT. The chain crosses the membrane as a helical span at residues 51 to 71; that stretch reads DGILGLALLAWTIGLRHGLDA. Topologically, residues 72–94 are cytoplasmic; the sequence is DHISAIDNATRQLVSQGQLPITC. The helical transmembrane segment at 95–115 threads the bilayer; that stretch reads GLFFSLGHSTIVIVVNVAIAV. Over 116–136 the chain is Extracellular; that stretch reads SVDIYDKLDRVGSIGGIVGAA. A helical membrane pass occupies residues 137 to 157; sequence VSASFLFLIACLNIYFLVGAI. Residues 158–210 are Cytoplasmic-facing; it reads KQRRSMKRRQALGLPPDEDEGDPSKIYGGGCMVRVVGPILRAVDRPWKMYPVG. The chain crosses the membrane as a helical span at residues 211–231; the sequence is VLFGFGFDTASSIALLAISAI. The Extracellular portion of the chain corresponds to 232-239; it reads AQRGPNGD. Residues 240–260 form a helical membrane-spanning segment; sequence AISHGKIVILPFLFTAGMSLV. Topologically, residues 261–382 are cytoplasmic; it reads DSLDSILMLY…AKANTMSSLS (122 aa). A helical membrane pass occupies residues 383–403; sequence IILTLLSILVALSISLIEIMG. At 404 to 439 the chain is on the extracellular side; sequence LIGDNCTQCQDAANDPDGGGLAGSWWRAWARANDQS. Asn408 carries an N-linked (GlcNAc...) asparagine glycan. A helical transmembrane segment spans residues 440–460; it reads GYIGAAIVGCFAAILAGWYGA. At 461–492 the chain is on the cytoplasmic side; the sequence is KWGKKKWKARRDANAAIVLEDNEDDAAETPVA.

It belongs to the NiCoT transporter (TC 2.A.52) family.

It is found in the cell membrane. Functionally, high-affinity nickel-specific transporter responsible for nickel uptake and required for high levels of activity of urease URE1. Does not transport cobalt. Plays a role in host brain invasion. This chain is High-affinity nickel transport protein, found in Cryptococcus neoformans var. grubii serotype A (strain H99 / ATCC 208821 / CBS 10515 / FGSC 9487) (Filobasidiella neoformans var. grubii).